Here is a 323-residue protein sequence, read N- to C-terminus: Beta-ketoacyl-[acyl-carrier-protein] synthase III (323 aa).

Catalysis depends on residues cysteine 113 and histidine 250. Residues 251–255 (QANRR) form an ACP-binding region. Residue asparagine 280 is part of the active site.

It belongs to the thiolase-like superfamily. FabH family. Homodimer.

The protein localises to the cytoplasm. It catalyses the reaction malonyl-[ACP] + acetyl-CoA + H(+) = 3-oxobutanoyl-[ACP] + CO2 + CoA. Its pathway is lipid metabolism; fatty acid biosynthesis. Catalyzes the condensation reaction of fatty acid synthesis by the addition to an acyl acceptor of two carbons from malonyl-ACP. Catalyzes the first condensation reaction which initiates fatty acid synthesis and may therefore play a role in governing the total rate of fatty acid production. Possesses both acetoacetyl-ACP synthase and acetyl transacylase activities. Its substrate specificity determines the biosynthesis of branched-chain and/or straight-chain of fatty acids. The protein is Beta-ketoacyl-[acyl-carrier-protein] synthase III of Allorhizobium ampelinum (strain ATCC BAA-846 / DSM 112012 / S4) (Agrobacterium vitis (strain S4)).